The sequence spans 100 residues: Small ribosomal subunit protein uS17 (100 aa).

Belongs to the universal ribosomal protein uS17 family. In terms of assembly, part of the 30S ribosomal subunit.

In terms of biological role, one of the primary rRNA binding proteins, it binds specifically to the 5'-end of 16S ribosomal RNA. The polypeptide is Small ribosomal subunit protein uS17 (Fervidobacterium nodosum (strain ATCC 35602 / DSM 5306 / Rt17-B1)).